Reading from the N-terminus, the 468-residue chain is UDP-N-acetylmuramate--L-alanine ligase (468 aa).

Residue 112-118 (GTHGKTT) coordinates ATP.

This sequence belongs to the MurCDEF family.

Its subcellular location is the cytoplasm. It catalyses the reaction UDP-N-acetyl-alpha-D-muramate + L-alanine + ATP = UDP-N-acetyl-alpha-D-muramoyl-L-alanine + ADP + phosphate + H(+). It participates in cell wall biogenesis; peptidoglycan biosynthesis. Functionally, cell wall formation. This Bordetella petrii (strain ATCC BAA-461 / DSM 12804 / CCUG 43448) protein is UDP-N-acetylmuramate--L-alanine ligase.